The chain runs to 352 residues: Coproporphyrin III ferrochelatase (352 aa).

2 residues coordinate Fe-coproporphyrin III: S52 and Y121. Residues H178 and E267 each contribute to the Fe(2+) site.

This sequence belongs to the ferrochelatase family.

The protein localises to the cytoplasm. The catalysed reaction is Fe-coproporphyrin III + 2 H(+) = coproporphyrin III + Fe(2+). Its pathway is porphyrin-containing compound metabolism; protoheme biosynthesis. In terms of biological role, involved in coproporphyrin-dependent heme b biosynthesis. Catalyzes the insertion of ferrous iron into coproporphyrin III to form Fe-coproporphyrin III. The protein is Coproporphyrin III ferrochelatase of Propionibacterium freudenreichii subsp. freudenreichii.